A 409-amino-acid polypeptide reads, in one-letter code: Na(+)/H(+) antiporter NhaA (409 aa).

11 helical membrane-spanning segments follow: residues 13–33, 58–78, 93–113, 120–140, 153–173, 176–196, 216–236, 256–276, 279–299, 326–346, and 363–383; these read SGGI…NTFL, LILW…GLEL, IALP…IFYL, FALG…LGIL, IFLM…IALF, SELS…LFAL, VAVL…AFFI, LHGW…AGIS, GVGL…GLFV, FIQL…SLFI, and LAIL…LKFS.

This sequence belongs to the NhaA Na(+)/H(+) (TC 2.A.33) antiporter family.

It localises to the cell inner membrane. It catalyses the reaction Na(+)(in) + 2 H(+)(out) = Na(+)(out) + 2 H(+)(in). Its function is as follows. Na(+)/H(+) antiporter that extrudes sodium in exchange for external protons. This chain is Na(+)/H(+) antiporter NhaA, found in Campylobacter concisus (strain 13826).